Reading from the N-terminus, the 560-residue chain is Protein GAT2 (560 aa).

Disordered regions lie at residues 274 to 297 (RQQE…FSNK), 345 to 383 (FLST…ISSS), and 412 to 461 (LNTK…SDEK). The span at 347–361 (STSSSSPSPTAGSAP) shows a compositional bias: low complexity. Basic and acidic residues predominate over residues 369–378 (RQDDPNDKKM). A compositionally biased stretch (basic residues) spans 414-425 (TKKKNNRGRPRA). The segment covering 428–456 (RQPTLTTSSHFINNSNPGAAAVSTTTPAA) has biased composition (polar residues). A GATA-type zinc finger spans residues 472 to 497 (CFHCGETETPEWRKGPYGTRTLCNAC).

The protein is Protein GAT2 (GAT2) of Saccharomyces cerevisiae (strain ATCC 204508 / S288c) (Baker's yeast).